An 898-amino-acid chain; its full sequence is Probable LRR receptor-like serine/threonine-protein kinase At4g20450 (898 aa).

The N-terminal stretch at 1-24 is a signal peptide; sequence MEGIHKLIFLALIWIFLITNIVDA. Over 25–535 the chain is Extracellular; the sequence is QDQQGFISLD…TGPGNNKKKL (511 aa). Asn40, Asn52, Asn98, Asn247, Asn253, Asn420, Asn443, Asn465, Asn484, and Asn489 each carry an N-linked (GlcNAc...) asparagine glycan. LRR repeat units lie at residues 455–477, 479–501, and 505–526; these read QLQK…LAKM, LLTF…LLNM, and GLIT…ESET. Residues 536-556 form a helical membrane-spanning segment; sequence LVPILASAASVGIIIAVLLLV. Residues 557-898 are Cytoplasmic-facing; sequence NILLLRKKKP…FGPEHIPDAR (342 aa). Phosphothreonine is present on Thr582. The region spanning 591–864 is the Protein kinase domain; the sequence is NNFERPLGEG…QVANELQECL (274 aa). ATP-binding positions include 597-605 and Lys619; that span reads LGEGGFGVV. Tyr664 bears the Phosphotyrosine mark. Residue Asp716 is the Proton acceptor of the active site. The residue at position 750 (Ser750) is a Phosphoserine. Thr751 carries the phosphothreonine modification. Tyr764 bears the Phosphotyrosine mark. The disordered stretch occupies residues 864–898; sequence LLTENSRKGGRHDVDSKSSLEQSTSFGPEHIPDAR. Basic and acidic residues predominate over residues 868–881; the sequence is NSRKGGRHDVDSKS.

The protein belongs to the protein kinase superfamily. Ser/Thr protein kinase family.

The protein localises to the membrane. The enzyme catalyses L-seryl-[protein] + ATP = O-phospho-L-seryl-[protein] + ADP + H(+). It carries out the reaction L-threonyl-[protein] + ATP = O-phospho-L-threonyl-[protein] + ADP + H(+). The chain is Probable LRR receptor-like serine/threonine-protein kinase At4g20450 from Arabidopsis thaliana (Mouse-ear cress).